The primary structure comprises 152 residues: MFRGATLVNLDSKGRLSVPTRYREQLLENAAGQMVCTIDIYHPCLLLYPLPEWEIIEQKLSRLSSMNPVERRVQRLLLGHASECQMDGAGRLLIAPVLRQHAGLTKEVMLVGQFNKFELWDETTWHQQVKEDIDAEQLATGDLSERLQDLSL.

SpoVT-AbrB domains lie at Ala-5–Glu-52 and Ala-81–Thr-124.

The protein belongs to the MraZ family. As to quaternary structure, dodecamer.

The protein resides in the cytoplasm. It localises to the nucleoid. Functionally, negatively regulates its own expression and that of the subsequent genes in the proximal part of the division and cell wall (dcw) gene cluster. Acts by binding directly to DNA. May also regulate the expression of genes outside the dcw cluster. The protein is Transcriptional regulator MraZ of Escherichia coli (strain K12).